Here is a 190-residue protein sequence, read N- to C-terminus: MLVLLNKPYGVLSQFSDRSQPPKRTLAEFGLPPDVYAAGRLDHDSEGLLVLTDDGALAHRLTDPRHKQPKTYWVQVEGAPQAEHLQALRDGVALNDGPTRPAQVRMLDPAPQLWPRDPPVRVRKTVPDAWLELQITEGRNRQVRRMTAAVGLPTLRLVRVAIGDWRLDALAPGQWRAEATTNARPSRSRR.

Aspartate 42 (nucleophile) is an active-site residue.

This sequence belongs to the pseudouridine synthase RsuA family.

The catalysed reaction is uridine(2457) in 23S rRNA = pseudouridine(2457) in 23S rRNA. In terms of biological role, responsible for synthesis of pseudouridine from uracil-2457 in 23S ribosomal RNA. The sequence is that of Ribosomal large subunit pseudouridine synthase E (rluE) from Xanthomonas axonopodis pv. citri (strain 306).